The chain runs to 100 residues: MNKLYWLTDLQLFASKKGVGSSKNGRDSNPKYLGAKLGDGQSTKAGQIIYRQRGNKIYPGLNVGQGKDHTLFAKTAGVVKYTKFMGDKTKVSVLPKEDNN.

Residues 1–13 (MNKLYWLTDLQLF) constitute a propeptide that is removed on maturation. A disordered region spans residues 17 to 39 (KGVGSSKNGRDSNPKYLGAKLGD).

The protein belongs to the bacterial ribosomal protein bL27 family. In terms of processing, the N-terminus is cleaved by ribosomal processing cysteine protease Prp.

In Ureaplasma parvum serovar 3 (strain ATCC 700970), this protein is Large ribosomal subunit protein bL27.